The following is a 105-amino-acid chain: Large ribosomal subunit protein uL24 (105 aa).

It belongs to the universal ribosomal protein uL24 family. As to quaternary structure, part of the 50S ribosomal subunit.

Functionally, one of two assembly initiator proteins, it binds directly to the 5'-end of the 23S rRNA, where it nucleates assembly of the 50S subunit. One of the proteins that surrounds the polypeptide exit tunnel on the outside of the subunit. The sequence is that of Large ribosomal subunit protein uL24 from Clostridium kluyveri (strain ATCC 8527 / DSM 555 / NBRC 12016 / NCIMB 10680 / K1).